The following is a 371-amino-acid chain: ADP-ribosylarginine hydrolase Tri1 (371 aa).

Residues M1 to P61 are N-terminal extension. Residues G70–E362 are ADP-ribosyl hydrolase domain. Positions 112, 113, 114, 157, and 313 each coordinate Mg(2+).

Belongs to the ADP-ribosylglycohydrolase family. It depends on Mg(2+) as a cofactor.

It carries out the reaction N(omega)-(ADP-D-ribosyl)-L-arginyl-[protein] + H2O = ADP-D-ribose + L-arginyl-[protein]. Functionally, immunity component of an interbacterial competition system (also called effector-immunity systems). Expression in E.coli neutralizes the toxic effects of non-cognate S.proteamaculans effector protein Tre1 (Tre1-Sp); cannot be co-purified with Tre1-Sp from E.coli, suggesting they do not form a stable complex. Probably acts as an arginine mono-ADP-ribosylhydrolase, mediating the removal of mono-ADP-ribose attached to arginine residues on proteins. Probably de-ADP-ribosylates FtsZ and possibly other proteins; the ability to hydrolyze ADP-ribosyl moieties is not essential for neutralization of its cognate toxin, strongly suggesting its N-terminal extension occludes the active site of cognate toxin Tre1. The polypeptide is ADP-ribosylarginine hydrolase Tri1 (Pseudomonas putida (strain GB-1)).